A 249-amino-acid polypeptide reads, in one-letter code: Putative TrmH family tRNA/rRNA methyltransferase YacO (249 aa).

The S-adenosyl-L-methionine site is built by Gly198, Leu218, and Leu227.

It belongs to the class IV-like SAM-binding methyltransferase superfamily. RNA methyltransferase TrmH family.

The chain is Putative TrmH family tRNA/rRNA methyltransferase YacO (yacO) from Bacillus subtilis (strain 168).